The sequence spans 332 residues: Large ribosomal subunit protein uL29m (332 aa).

The interval 19-40 (RFTKPKPKPAKRENVRLPTQRT) is disordered. Residues 264–327 (TSENTESAIA…IQLQEEDAKN (64 aa)) are a coiled coil.

It belongs to the universal ribosomal protein uL29 family. Component of the mitochondrial large ribosomal subunit. Mature mitochondrial ribosomes consist of a small (37S) and a large (54S) subunit. The 37S subunit contains at least 33 different proteins and 1 molecule of RNA (15S). The 54S subunit contains at least 45 different proteins and 1 molecule of RNA (21S).

Its subcellular location is the mitochondrion. The protein is Large ribosomal subunit protein uL29m (MRPL4) of Kluyveromyces lactis (strain ATCC 8585 / CBS 2359 / DSM 70799 / NBRC 1267 / NRRL Y-1140 / WM37) (Yeast).